The chain runs to 202 residues: Imidazoleglycerol-phosphate dehydratase (202 aa).

Belongs to the imidazoleglycerol-phosphate dehydratase family.

The protein localises to the cytoplasm. The enzyme catalyses D-erythro-1-(imidazol-4-yl)glycerol 3-phosphate = 3-(imidazol-4-yl)-2-oxopropyl phosphate + H2O. The protein operates within amino-acid biosynthesis; L-histidine biosynthesis; L-histidine from 5-phospho-alpha-D-ribose 1-diphosphate: step 6/9. This Nocardioides sp. (strain ATCC BAA-499 / JS614) protein is Imidazoleglycerol-phosphate dehydratase.